A 353-amino-acid chain; its full sequence is ATPase GET3A (353 aa).

27–34 (KGGVGKTT) lines the ATP pocket. Residue Asp56 is part of the active site. ATP contacts are provided by Glu226 and Asn253. A coiled-coil region spans residues 320–353 (TTSRSNVEELERKVHTLRLQLKTAEEELERVKSG).

It belongs to the arsA ATPase family. Homodimer. Interacts with GET1 and GET4.

It is found in the cytoplasm. It localises to the cytosol. Its subcellular location is the endoplasmic reticulum. The catalysed reaction is ATP + H2O = ADP + phosphate + H(+). ATPase required for the post-translational delivery of tail-anchored (TA) proteins to the endoplasmic reticulum. Recognizes and selectively binds the transmembrane domain of TA proteins in the cytosol. This complex then targets to the endoplasmic reticulum by membrane-bound receptors, where the tail-anchored protein is released for insertion. This process is regulated by ATP binding and hydrolysis. ATP binding drives the homodimer towards the closed dimer state, facilitating recognition of newly synthesized TA membrane proteins. ATP hydrolysis is required for insertion. Subsequently, the homodimer reverts towards the open dimer state, lowering its affinity for the membrane-bound receptor, and returning it to the cytosol to initiate a new round of targeting. Involved in the control of root hair growth through the regulation of syntaxin SYP123 expression. The chain is ATPase GET3A from Arabidopsis thaliana (Mouse-ear cress).